The sequence spans 529 residues: Bifunctional purine biosynthesis protein PurH (529 aa).

Positions 1–148 (MQQRRPVRRA…KNHKDVAIVV (148 aa)) constitute an MGS-like domain. The residue at position 287 (Lys287) is an N6-acetyllysine.

The protein belongs to the PurH family.

It catalyses the reaction (6R)-10-formyltetrahydrofolate + 5-amino-1-(5-phospho-beta-D-ribosyl)imidazole-4-carboxamide = 5-formamido-1-(5-phospho-D-ribosyl)imidazole-4-carboxamide + (6S)-5,6,7,8-tetrahydrofolate. The catalysed reaction is IMP + H2O = 5-formamido-1-(5-phospho-D-ribosyl)imidazole-4-carboxamide. The protein operates within purine metabolism; IMP biosynthesis via de novo pathway; 5-formamido-1-(5-phospho-D-ribosyl)imidazole-4-carboxamide from 5-amino-1-(5-phospho-D-ribosyl)imidazole-4-carboxamide (10-formyl THF route): step 1/1. It functions in the pathway purine metabolism; IMP biosynthesis via de novo pathway; IMP from 5-formamido-1-(5-phospho-D-ribosyl)imidazole-4-carboxamide: step 1/1. The protein is Bifunctional purine biosynthesis protein PurH of Escherichia coli (strain 55989 / EAEC).